The sequence spans 228 residues: Small ribosomal subunit protein uS3 (228 aa).

In terms of domain architecture, KH type-2 spans 39-107 (VREYLQDKLK…PVHINIEEIR (69 aa)).

The protein belongs to the universal ribosomal protein uS3 family. As to quaternary structure, part of the 30S ribosomal subunit. Forms a tight complex with proteins S10 and S14.

Its function is as follows. Binds the lower part of the 30S subunit head. Binds mRNA in the 70S ribosome, positioning it for translation. This chain is Small ribosomal subunit protein uS3, found in Stutzerimonas stutzeri (strain A1501) (Pseudomonas stutzeri).